We begin with the raw amino-acid sequence, 206 residues long: Large ribosomal subunit protein uL3 (206 aa).

Positions 127–151 (SGGPSSHGSKFHRHLGGTGQATTPA) are disordered.

Belongs to the universal ribosomal protein uL3 family. Part of the 50S ribosomal subunit. Forms a cluster with proteins L14 and L19.

One of the primary rRNA binding proteins, it binds directly near the 3'-end of the 23S rRNA, where it nucleates assembly of the 50S subunit. This is Large ribosomal subunit protein uL3 from Borreliella afzelii (strain PKo) (Borrelia afzelii).